A 624-amino-acid polypeptide reads, in one-letter code: 1-deoxy-D-xylulose-5-phosphate synthase (624 aa).

Thiamine diphosphate-binding positions include His-80 and 121-123 (GHS). Asp-152 provides a ligand contact to Mg(2+). Thiamine diphosphate-binding positions include 153 to 154 (GA), Asn-181, Tyr-289, and Glu-371. Asn-181 is a binding site for Mg(2+).

Belongs to the transketolase family. DXPS subfamily. As to quaternary structure, homodimer. The cofactor is Mg(2+). Thiamine diphosphate is required as a cofactor.

The catalysed reaction is D-glyceraldehyde 3-phosphate + pyruvate + H(+) = 1-deoxy-D-xylulose 5-phosphate + CO2. The protein operates within metabolic intermediate biosynthesis; 1-deoxy-D-xylulose 5-phosphate biosynthesis; 1-deoxy-D-xylulose 5-phosphate from D-glyceraldehyde 3-phosphate and pyruvate: step 1/1. In terms of biological role, catalyzes the acyloin condensation reaction between C atoms 2 and 3 of pyruvate and glyceraldehyde 3-phosphate to yield 1-deoxy-D-xylulose-5-phosphate (DXP). This chain is 1-deoxy-D-xylulose-5-phosphate synthase, found in Blochmanniella pennsylvanica (strain BPEN).